The following is a 175-amino-acid chain: NADH-ubiquinone oxidoreductase chain 6 (175 aa).

The next 5 helical transmembrane spans lie at 1–21, 27–47, 49–69, 88–108, and 149–169; these read MMTYIVFILSTVFVVGFVGFS, VYGGVGLIVSGGVGCGIIMNF, GSFLGLMVFLIYLGGMMVVFG, VVFGAFVFGLFMEMLLVLYVL, and YGMWLVVVTGWSLFIAVVVVM.

The protein belongs to the complex I subunit 6 family. Core subunit of respiratory chain NADH dehydrogenase (Complex I) which is composed of 45 different subunits.

The protein localises to the mitochondrion inner membrane. It catalyses the reaction a ubiquinone + NADH + 5 H(+)(in) = a ubiquinol + NAD(+) + 4 H(+)(out). Core subunit of the mitochondrial membrane respiratory chain NADH dehydrogenase (Complex I) which catalyzes electron transfer from NADH through the respiratory chain, using ubiquinone as an electron acceptor. Essential for the catalytic activity and assembly of complex I. In Pteropus scapulatus (Little red flying fox), this protein is NADH-ubiquinone oxidoreductase chain 6 (MT-ND6).